The primary structure comprises 538 residues: Dolichol kinase (538 aa).

The Lumenal segment spans residues 1-13 (MTRECPSPAPGPG). Residues 14-34 (APLSGSVLAEAAVVFAVVLSI) traverse the membrane as a helical segment. The Cytoplasmic portion of the chain corresponds to 35-74 (HATVWDRYSWCAVALAVQAFYVQYKWDRLLQQGSAVFQFR). A helical membrane pass occupies residues 75-95 (MSANSGLLPASMVMPLLGLVM). Topologically, residues 96-111 (KERCQTAGNPFFERFG) are lumenal. The chain crosses the membrane as a helical span at residues 112-132 (IVVAATGMAVALFSSVLALGI). The Cytoplasmic segment spans residues 133–134 (TR). A helical transmembrane segment spans residues 135-155 (PVPTNTCVILGLAGGVIIYIM). The Lumenal segment spans residues 156–163 (KHSLSVGE). A helical transmembrane segment spans residues 164–184 (VIEVLEVLLIFVYLNMILLYL). Residues 185–188 (LPRC) are Cytoplasmic-facing. The chain crosses the membrane as a helical span at residues 189–209 (FTPGEALLVLGGISFVLNQLI). At 210–224 (KRSLTLVESQGDPVD) the chain is on the lumenal side. A helical transmembrane segment spans residues 225 to 245 (FFLLVVVVGMVLMGIFFSTLF). Topologically, residues 246–254 (VFMDSGTWA) are cytoplasmic. Residues 255 to 275 (SSIFFHLMTCVLSLGVVLPWL) form a helical membrane-spanning segment. Topologically, residues 276–297 (HRLIRRNPLLWLLQFLFQTDTR) are lumenal. The helical transmembrane segment at 298-318 (IYLLAYWSLLATLACLVVLYQ) threads the bilayer. At 319–337 (NAKRSSSESKKHQAPTIAR) the chain is on the cytoplasmic side. Residues 338 to 354 (KYFHLIVVATYIPGIIF) traverse the membrane as a helical segment. The Lumenal portion of the chain corresponds to 355-359 (DRPLL). A helical membrane pass occupies residues 360–380 (YVAATVCLAVFIFLEYVRYFR). At 381-401 (IKPLGHTLRSFLSLFLDERDS) the chain is on the cytoplasmic side. The helical transmembrane segment at 402–422 (GPLILTHIYLLLGMSLPIWLI) threads the bilayer. The Lumenal portion of the chain corresponds to 423–436 (PRPCTQKGSLGGAR). A helical membrane pass occupies residues 437 to 457 (ALVPYAGVLAVGVGDTVASIF). Topologically, residues 458–472 (GSTMGEIRWPGTKKT) are cytoplasmic. The CTP-binding stretch occupies residues 459–474 (STMGEIRWPGTKKTFE). A helical transmembrane segment spans residues 473–493 (FEGTMTSIFAQIISVALILIF). At 494-495 (DS) the chain is on the lumenal side. The chain crosses the membrane as a helical span at residues 496 to 516 (GVDLNYSYAWILGSISTVSLL). Topologically, residues 517-538 (EAYTTQIDNLLLPLYLLILLMA) are cytoplasmic.

Belongs to the polyprenol kinase family. Ubiquitous.

It localises to the endoplasmic reticulum membrane. The catalysed reaction is a di-trans,poly-cis-dolichol + CTP = a di-trans,poly-cis-dolichyl phosphate + CDP + H(+). It participates in protein modification; protein glycosylation. Catalyzes CTP-mediated phosphorylation of dolichol, the terminal step in de novo dolichyl monophosphate (Dol-P) biosynthesis. Dol-P is a lipid carrier essential for the synthesis of N-linked and O-linked oligosaccharides and for GPI anchors. In Homo sapiens (Human), this protein is Dolichol kinase (DOLK).